Here is a 123-residue protein sequence, read N- to C-terminus: Large ribosomal subunit protein bL12 (123 aa).

It belongs to the bacterial ribosomal protein bL12 family. In terms of assembly, homodimer. Part of the ribosomal stalk of the 50S ribosomal subunit. Forms a multimeric L10(L12)X complex, where L10 forms an elongated spine to which 2 to 4 L12 dimers bind in a sequential fashion. Binds GTP-bound translation factors.

Its function is as follows. Forms part of the ribosomal stalk which helps the ribosome interact with GTP-bound translation factors. Is thus essential for accurate translation. This Bacillus licheniformis (strain ATCC 14580 / DSM 13 / JCM 2505 / CCUG 7422 / NBRC 12200 / NCIMB 9375 / NCTC 10341 / NRRL NRS-1264 / Gibson 46) protein is Large ribosomal subunit protein bL12.